The chain runs to 217 residues: Probable transaldolase (217 aa).

The active-site Schiff-base intermediate with substrate is the Lys83.

It belongs to the transaldolase family. Type 3B subfamily.

It is found in the cytoplasm. It catalyses the reaction D-sedoheptulose 7-phosphate + D-glyceraldehyde 3-phosphate = D-erythrose 4-phosphate + beta-D-fructose 6-phosphate. The protein operates within carbohydrate degradation; pentose phosphate pathway; D-glyceraldehyde 3-phosphate and beta-D-fructose 6-phosphate from D-ribose 5-phosphate and D-xylulose 5-phosphate (non-oxidative stage): step 2/3. Transaldolase is important for the balance of metabolites in the pentose-phosphate pathway. The sequence is that of Probable transaldolase from Paracoccus denitrificans (strain Pd 1222).